Here is a 987-residue protein sequence, read N- to C-terminus: MTPALREATAKGISFSSLPSTMESDKMLYMESPRTVDEKLKGDTFSQMLGFPTPEPTLNTNFVNLKHFGSPQSSKHYQTVFLMRSNSTLNKHNENYKQKKLGEPSCNKLKNILYNGSNIQLSKICLSHSEEFIKKEPLSDTTSQCMKDVQIILDSNITKDTNVDKVQLQNCKWYQENALLDKVTDAEIKKGLLHCTQKKIVPGHSNVPVSSSAAEKEEEVHARLLHCVSKQKILLSQARRTQKHLQMLLAKHVVKHYGQQMKLSMKHQLPKMKTFHEPTTILGNSLPKCTEIKPEVNTLTAENKLWDDAKNGFARCTAAEIQRFAFSATGLLSHVEEGLDSDATDSSSDDDLDEYTLRKNVAVNCSTEWKWLVDRARVGSRWTWLQAQISDLECKIQQLTDIHRQIRASKGIVVLEECQLPKDILKKQMQFADQAASLNILGNPQVPQECQDPVPEQDFEMSPSSPTLLLRNIEKQSAQLTEIINSLIAPLNLSPTSSPLSSKSCSHKCLANGIYRSASENLDELSSSSSWLLNQKHSKKKRKDRTRLKSSSLTFMSTSARTRPLQSFHKRKLYRLSPTFYWTPQTLPSKETAFLNTTQMPCLQSASTWSSYEHNSESYLLREHVSELDSSFHSVLSLPSDVPLHFHFETLLKKTEIKGNLAENKFVDEYIISPSPVHSTLNQWRNGYSPICKPQIRSESSAQLLQGRKKRHLSETALGERTKLEESDFQHTESGSHSNFTAVSNVNVLSRIQNSSRNTARRRLRSESSYDIDNIVIPMSLVAPAKLEKLQYKEILTPSWRMVVLQPLDEYNLGKEEIEDLSDEVFSLRHKKYEEREQARWSLWEQSKWHRRNSRAYSKNVEGQDLLLKEYPNNFSSSQQCAAASPPGLPSENQDLCAYGLPSLNQSQETKSLWWERRAFPLKGEDMAALLCQDEKKDQVERSSTAFHGEIFGTSVPENGHHPKKQSDGMEEYKTFGLGLTNVKKNR.

Lys-134 is covalently cross-linked (Glycyl lysine isopeptide (Lys-Gly) (interchain with G-Cter in SUMO2)). Ser-462 bears the Phosphoserine mark. The tract at residues 708 to 738 is disordered; sequence RKKRHLSETALGERTKLEESDFQHTESGSHS. Positions 718–731 are enriched in basic and acidic residues; sequence LGERTKLEESDFQH. A PEHE domain is found at 794–915; that stretch reads EILTPSWRMV…QSQETKSLWW (122 aa). Lys-859 is modified (N6-acetyllysine). Residues 949–972 form a disordered region; sequence GEIFGTSVPENGHHPKKQSDGMEE. Residues 959 to 972 are compositionally biased toward basic and acidic residues; sequence NGHHPKKQSDGMEE.

Acetylated on lysine residues by KAT8 upon ionizing radiation-induced DNA damage; deacetylated by HDAC3.

This is KAT8 regulatory NSL complex subunit 1-like protein (KANSL1L) from Homo sapiens (Human).